Here is a 119-residue protein sequence, read N- to C-terminus: MSDLIMKIEAQQKAENPPVFRVGDTVKVHFKIVEGKTERIQVYEGLVICFKNSGIGRTFTVRKNSYGVGVERVFPLHSPRIAKVEVVRPGKVRRAKLYYIRDKVGKAAKIKTLITKKNS.

This sequence belongs to the bacterial ribosomal protein bL19 family.

Functionally, this protein is located at the 30S-50S ribosomal subunit interface and may play a role in the structure and function of the aminoacyl-tRNA binding site. The sequence is that of Large ribosomal subunit protein bL19 from Treponema denticola (strain ATCC 35405 / DSM 14222 / CIP 103919 / JCM 8153 / KCTC 15104).